Consider the following 393-residue polypeptide: Staphopain B (393 aa).

Positions 1-36 (MNSSYKSRVFNIISIIMVSMLILSLGAFANNNKAKA) are cleaved as a signal peptide. A propeptide spanning residues 37 to 219 (DSHSKQLEIN…KVEENEAIQE (183 aa)) is cleaved from the precursor. Residues Cys-243, His-340, and Asn-360 contribute to the active site.

It belongs to the peptidase C47 family. In the cytoplasm, prematurely activated/folded SspB forms a stable non-covalent complex with SspC. Proteolytically cleaved by staphylococcal serine protease (SspA).

It is found in the secreted. Its activity is regulated as follows. Prematurely activated/folded staphopain B is inhibited by staphostatin B (SspC), which is probably required to protect staphylococcal cytoplasmic proteins from degradation by SspB. In terms of biological role, cysteine protease that plays an important role in the inhibition of host innate immune response. Degrades host elastin, fibrogen, fibronectin and kininogen. Blocks phagocytosis of opsonised S.aureus by neutrophils and monocytes by inducing their death in a proteolytic activity-dependent manner. Decreases surface expression of the 'don't eat me' signal CD31 on neutrophils. Cleaves host galectin-3/LGALS3, thereby inhibiting the neutrophil-activating ability of the lectin. The sequence is that of Staphopain B (sspB) from Staphylococcus aureus (strain Mu50 / ATCC 700699).